The chain runs to 228 residues: Urease accessory protein UreF (228 aa).

It belongs to the UreF family. In terms of assembly, ureD, UreF and UreG form a complex that acts as a GTP-hydrolysis-dependent molecular chaperone, activating the urease apoprotein by helping to assemble the nickel containing metallocenter of UreC. The UreE protein probably delivers the nickel.

It is found in the cytoplasm. Functionally, required for maturation of urease via the functional incorporation of the urease nickel metallocenter. The chain is Urease accessory protein UreF from Lachnoclostridium phytofermentans (strain ATCC 700394 / DSM 18823 / ISDg) (Clostridium phytofermentans).